The primary structure comprises 328 residues: Dolichyl-diphosphooligosaccharide--protein glycosyltransferase subunit MAGT1 (328 aa).

An N-terminal signal peptide occupies residues 1–22; it reads MLHKLLIVVFLVVCLHDMRLNG. Topologically, residues 23-177 are extracellular; that stretch reads QKKKETLLSE…DVHIRVIRPP (155 aa). Residues 40 to 168 enclose the Thioredoxin domain; that stretch reads WVSKRAVVRL…LARWVADRTD (129 aa). The N-linked (GlcNAc...) asparagine glycan is linked to asparagine 64. A disulfide bridge connects residues cysteine 80 and cysteine 83. A helical membrane pass occupies residues 178-198; sequence NYAGPLMLGLLLAFIGSLAYL. Topologically, residues 199–202 are cytoplasmic; sequence RRNN. A helical membrane pass occupies residues 203–223; the sequence is LEFLFNKNVWAFSALCFVLIM. Topologically, residues 224 to 257 are extracellular; the sequence is TSGQMWNHIRGPPYAHKNPNTGQVSYIHGSSQAQ. A helical transmembrane segment spans residues 258–278; the sequence is FVAETHIVLLFNAAVTIGMVL. At 279-293 the chain is on the cytoplasmic side; sequence LHEAATSGLDIVKRK. Residues 294–314 form a helical membrane-spanning segment; sequence IMCVAGIGLVVLFFSWLLSVF. Topologically, residues 315 to 328 are extracellular; sequence RAKYHGYPYSFLFG.

Belongs to the OST3/OST6 family. Accessory component of the STT3B-containing form of the oligosaccharyltransferase (OST) complex.

The protein localises to the cell membrane. It localises to the endoplasmic reticulum. It is found in the endoplasmic reticulum membrane. It functions in the pathway protein modification; protein glycosylation. In terms of biological role, accessory component of the STT3B-containing form of the N-oligosaccharyl transferase (OST) complex which catalyzes the transfer of a high mannose oligosaccharide from a lipid-linked oligosaccharide donor to an asparagine residue within an Asn-X-Ser/Thr consensus motif in nascent polypeptide chains. Involved in N-glycosylation of STT3B-dependent substrates. Specifically required for the glycosylation of a subset of acceptor sites that are near cysteine residues; in this function seems to act redundantly with TUSC3. In its oxidized form proposed to form transient mixed disulfides with a glycoprotein substrate to facilitate access of STT3B to the unmodified acceptor site. Also has oxidoreductase-independent functions in the STT3B-containing OST complex possibly involving substrate recognition. Could indirectly play a role in Mg(2+) transport. The chain is Dolichyl-diphosphooligosaccharide--protein glycosyltransferase subunit MAGT1 from Danio rerio (Zebrafish).